The primary structure comprises 502 residues: Hexokinase-2 (502 aa).

The chain crosses the membrane as a helical span at residues 4 to 24 (VAVATTVVCSVAVCAAAALIV). The 453-residue stretch at 35–487 (ARVIEILKAF…SGVGAALLAA (453 aa)) folds into the Hexokinase domain. Residues 90–228 (SGDETGFFYA…GLDMLVAALV (139 aa)) form a hexokinase small subdomain region. Residues glycine 104, threonine 105, and asparagine 106 each coordinate ADP. D-glucose is bound by residues threonine 194, lysine 195, asparagine 229, and aspartate 230. Residues 229 to 476 (NDTIGTLAGG…ESVEVILSND (248 aa)) form a hexokinase large subdomain region. Position 253 (threonine 253) interacts with ADP. 3 residues coordinate D-glucose: asparagine 256, glutamate 284, and glutamate 315. Glycine 441 is an ADP binding site.

This sequence belongs to the hexokinase family. In terms of tissue distribution, highly expressed in siliques, at intermediate levels in roots and flowers, and at lower levels in stems, rosette and cauline leaves.

It is found in the mitochondrion outer membrane. It catalyses the reaction a D-hexose + ATP = a D-hexose 6-phosphate + ADP + H(+). The catalysed reaction is D-fructose + ATP = D-fructose 6-phosphate + ADP + H(+). The enzyme catalyses D-glucose + ATP = D-glucose 6-phosphate + ADP + H(+). It functions in the pathway carbohydrate metabolism; hexose metabolism. Its pathway is carbohydrate degradation; glycolysis; D-glyceraldehyde 3-phosphate and glycerone phosphate from D-glucose: step 1/4. Its function is as follows. Fructose and glucose phosphorylating enzyme. May be involved in the phosphorylation of glucose during the export from mitochondrion to cytosol. Acts as a sugar sensor which may regulate sugar-dependent gene repression or activation. Mediates the effects of sugar on plant growth and development independently of its catalytic activity or the sugar metabolism. May regulate the execution of program cell death in plant cells. This is Hexokinase-2 (HXK2) from Arabidopsis thaliana (Mouse-ear cress).